Consider the following 115-residue polypeptide: Ribonuclease P protein component (115 aa).

This sequence belongs to the RnpA family. As to quaternary structure, consists of a catalytic RNA component (M1 or rnpB) and a protein subunit.

The enzyme catalyses Endonucleolytic cleavage of RNA, removing 5'-extranucleotides from tRNA precursor.. Functionally, RNaseP catalyzes the removal of the 5'-leader sequence from pre-tRNA to produce the mature 5'-terminus. It can also cleave other RNA substrates such as 4.5S RNA. The protein component plays an auxiliary but essential role in vivo by binding to the 5'-leader sequence and broadening the substrate specificity of the ribozyme. This chain is Ribonuclease P protein component, found in Bacillus cereus (strain AH187).